Consider the following 199-residue polypeptide: ATP-dependent Clp protease proteolytic subunit (199 aa).

The active-site Nucleophile is S99. H124 is a catalytic residue.

The protein belongs to the peptidase S14 family. In terms of assembly, fourteen ClpP subunits assemble into 2 heptameric rings which stack back to back to give a disk-like structure with a central cavity, resembling the structure of eukaryotic proteasomes.

It localises to the cytoplasm. It catalyses the reaction Hydrolysis of proteins to small peptides in the presence of ATP and magnesium. alpha-casein is the usual test substrate. In the absence of ATP, only oligopeptides shorter than five residues are hydrolyzed (such as succinyl-Leu-Tyr-|-NHMec, and Leu-Tyr-Leu-|-Tyr-Trp, in which cleavage of the -Tyr-|-Leu- and -Tyr-|-Trp bonds also occurs).. In terms of biological role, cleaves peptides in various proteins in a process that requires ATP hydrolysis. Has a chymotrypsin-like activity. Plays a major role in the degradation of misfolded proteins. This Lactococcus lactis subsp. lactis (strain IL1403) (Streptococcus lactis) protein is ATP-dependent Clp protease proteolytic subunit.